A 260-amino-acid polypeptide reads, in one-letter code: E3 ubiquitin-protein ligase SRFP1 (260 aa).

The segment at 11-80 (FGRMGFGCKH…VAQVCYNCGV (70 aa)) adopts a CHY-type zinc-finger fold. 24 residues coordinate Zn(2+): Cys18, His20, Cys31, Cys32, Cys38, Cys41, His42, His50, Cys62, Cys65, Cys75, Cys78, Cys87, Cys90, His103, Cys104, Cys107, Cys110, His120, Cys121, Cys124, Cys127, His136, and Cys138. The CTCHY-type zinc-finger motif lies at 82–146 (MGEYFCSACK…CCIENSMKNN (65 aa)). An RING-type; atypical zinc finger spans residues 147-190 (CPICYEYLFDSLRETSVLRCGHTMHLQCFHEMLKHDKFSCPICS).

In terms of tissue distribution, expressed in roots, leaves, nodes and panicles.

It localises to the nucleus. The protein localises to the cytoplasm. It carries out the reaction S-ubiquitinyl-[E2 ubiquitin-conjugating enzyme]-L-cysteine + [acceptor protein]-L-lysine = [E2 ubiquitin-conjugating enzyme]-L-cysteine + N(6)-ubiquitinyl-[acceptor protein]-L-lysine.. It participates in protein modification; protein ubiquitination. Its function is as follows. Possesses E3 ubiquitin-protein ligase activity in vitro. Possesses transactivation activity in yeast cells. May modulate abiotic stress responses by negatively regulating antioxidant enzymes-mediated reactive oxygen species (ROS) removal. In Oryza sativa subsp. japonica (Rice), this protein is E3 ubiquitin-protein ligase SRFP1.